The sequence spans 64 residues: Large ribosomal subunit protein bL35 (64 aa).

Belongs to the bacterial ribosomal protein bL35 family.

The chain is Large ribosomal subunit protein bL35 from Colwellia psychrerythraea (strain 34H / ATCC BAA-681) (Vibrio psychroerythus).